The following is a 327-amino-acid chain: Olfactory receptor 9G4 (327 aa).

Topologically, residues 1–43 are extracellular; sequence MIFPSHDSQAFTSVDMEVGNCTILTEFILLGFSADSQWQPILF. Asn20 carries an N-linked (GlcNAc...) asparagine glycan. The helical transmembrane segment at 44–64 threads the bilayer; the sequence is GVFLMLYLITLSGNMTLVILI. The Cytoplasmic segment spans residues 65–71; sequence RTDSHLH. The helical transmembrane segment at 72–92 threads the bilayer; it reads TPMYFFIGNLSFLDFWYTSVY. Over 93 to 113 the chain is Extracellular; the sequence is TPKILASCVSEDKRISLAGCG. A disulfide bridge connects residues Cys112 and Cys194. Residues 114 to 134 form a helical membrane-spanning segment; it reads AQLFFSCVVAYTECYLLAAMA. Residues 135–152 are Cytoplasmic-facing; that stretch reads YDRHAAICNPLLYSGTMS. The helical transmembrane segment at 153–173 threads the bilayer; the sequence is TALCTGLVAGSYIGGFLNAIA. Residues 174–212 are Extracellular-facing; sequence HTANTFRLHFCGKNIIDHFFCDAPPLVKMSCTNTRVYEK. The helical transmembrane segment at 213 to 233 threads the bilayer; sequence VLLGVVGFTVLSSILAILISY. At 234–252 the chain is on the cytoplasmic side; sequence VNILLAILRIHSASGRHKA. Residues 253–273 form a helical membrane-spanning segment; the sequence is FSTCASHLISVMLFYGSLLFM. Topologically, residues 274-286 are extracellular; that stretch reads YSRPSSTYSLERD. Residues 287–307 form a helical membrane-spanning segment; that stretch reads KVAALFYTVINPLLNPLIYSL. Topologically, residues 308 to 327 are cytoplasmic; that stretch reads RNKDIKEAFRKATQTIQPQT.

This sequence belongs to the G-protein coupled receptor 1 family.

It is found in the cell membrane. Its function is as follows. Odorant receptor. This chain is Olfactory receptor 9G4 (OR9G4), found in Homo sapiens (Human).